A 457-amino-acid polypeptide reads, in one-letter code: Solute carrier family 38 member 6 (457 aa).

At M1 the chain carries N-acetylmethionine. 2 positions are modified to phosphoserine: S4 and S7. Transmembrane regions (helical) follow at residues 48 to 68, 70 to 90, 112 to 132, 171 to 191, and 192 to 212; these read FGLS…LGLA, VMAN…ALLA, LGLF…IIIQ, LLII…KIGF, and LGYT…VVVI. Cysteines 219 and 239 form a disulfide. N-linked (GlcNAc...) asparagine glycosylation is present at N234. A helical membrane pass occupies residues 251–271; the sequence is VYAIPTMAFSFLCHTSVLPIY. An N-linked (GlcNAc...) asparagine glycan is attached at N284. A run of 5 helical transmembrane segments spans residues 289–309, 328–348, 372–392, 395–415, and 432–452; these read AIAL…LTFY, AAVM…VPLI, SLTT…VPDI, VFGV…PGLF, and ALSL…LIIL.

It belongs to the amino acid/polyamine transporter 2 family.

It is found in the cell membrane. The protein resides in the synapse. The catalysed reaction is L-glutamine(out) = L-glutamine(in). It carries out the reaction L-glutamate(out) = L-glutamate(in). Its function is as follows. Amino acid transporter with an apparent selectivity for L-glutamine and L-glutamate. May facilitate glutamine uptake in excitatory neurons. The transport mechanism remains to be elucidated. This chain is Solute carrier family 38 member 6, found in Rattus norvegicus (Rat).